The primary structure comprises 64 residues: DNA gyrase inhibitor YacG (64 aa).

Residues cysteine 7, cysteine 10, cysteine 26, and cysteine 30 each coordinate Zn(2+). Residues 44-64 (RIPGEIDPELLPYPEEGEQWQ) are disordered.

This sequence belongs to the DNA gyrase inhibitor YacG family. Interacts with GyrB. It depends on Zn(2+) as a cofactor.

Functionally, inhibits all the catalytic activities of DNA gyrase by preventing its interaction with DNA. Acts by binding directly to the C-terminal domain of GyrB, which probably disrupts DNA binding by the gyrase. The chain is DNA gyrase inhibitor YacG from Aeromonas hydrophila subsp. hydrophila (strain ATCC 7966 / DSM 30187 / BCRC 13018 / CCUG 14551 / JCM 1027 / KCTC 2358 / NCIMB 9240 / NCTC 8049).